Reading from the N-terminus, the 818-residue chain is IQ and AAA domain-containing protein 1-like (818 aa).

The IQ domain maps to 206–235 (QGQAAVTIQKVWKGYLQRKRTQQDRRMEME). Disordered stretches follow at residues 344 to 377 (QMQE…AKKG) and 458 to 482 (EERP…KDLT). Positions 463–476 (RAPKKTPGKKTGKK) are enriched in basic residues. 567 to 574 (GPSGMGKK) contacts ATP. The tract at residues 795 to 818 (SMKHRMDQLEAEEAKLDKEKKKRK) is disordered. Residues 798–818 (HRMDQLEAEEAKLDKEKKKRK) are compositionally biased toward basic and acidic residues.

This sequence belongs to the AAA ATPase family.

This chain is IQ and AAA domain-containing protein 1-like (IQCA1L), found in Homo sapiens (Human).